Here is a 502-residue protein sequence, read N- to C-terminus: Alpha-ketoglutarate-dependent dioxygenase FTO (502 aa).

A fe2OG dioxygenase domain region spans residues threonine 32–serine 324. Substrate is bound by residues arginine 96 and tyrosine 108. A 2-oxoglutarate-binding site is contributed by asparagine 202. Positions proline 210–glycine 221 are loop L1; predicted to block binding of double-stranded DNA or RNA. The residue at position 213 (lysine 213) is an N6-acetyllysine. Fe cation is bound by residues histidine 228 and aspartate 230. A substrate-binding site is contributed by histidine 228–glutamate 231. Residue tyrosine 292 coordinates 2-oxoglutarate. Histidine 304 contributes to the Fe cation binding site. 2-oxoglutarate is bound by residues arginine 313 to serine 315, threonine 317, and arginine 319.

Belongs to the fto family. As to quaternary structure, monomer. May also exist as homodimer. Fe(2+) is required as a cofactor. Ubiquitous. Detected in brain, brain cortex, hypothalamus, cerebellum, liver, pancreas, heart, kidney, white adipose tissue and skeletal muscle. Most abundant in the brain, particularly in hypothalamic nuclei governing energy balance.

Its subcellular location is the nucleus. It localises to the nucleus speckle. The protein resides in the cytoplasm. The enzyme catalyses a 5'-end (N(7)-methyl 5'-triphosphoguanosine)-(N(6),2'-O-dimethyladenosine) in mRNA + 2-oxoglutarate + O2 = a 5'-end (N(7)-methyl 5'-triphosphoguanosine)-(2'-O-methyladenosine) in mRNA + formaldehyde + succinate + CO2. It catalyses the reaction an N(6)-methyladenosine in mRNA + 2-oxoglutarate + O2 = an adenosine in mRNA + formaldehyde + succinate + CO2. The catalysed reaction is N(6)-methyladenosine in U6 snRNA + 2-oxoglutarate + O2 = adenosine in U6 snRNA + formaldehyde + succinate + CO2. It carries out the reaction a 5'-end (N(7)-methyl 5'-triphosphoguanosine)-(N(6),2'-O-dimethyladenosine) in U6 snRNA + 2-oxoglutarate + O2 = a 5'-end (N(7)-methyl 5'-triphosphoguanosine)-(2'-O-methyladenosine) in U6 snRNA + formaldehyde + succinate + CO2. The enzyme catalyses an N(1)-methyladenosine in tRNA + 2-oxoglutarate + O2 = an adenosine in tRNA + formaldehyde + succinate + CO2. Activated by ascorbate. Inhibited by N-oxalylglycine, fumarate and succinate. Its function is as follows. RNA demethylase that mediates oxidative demethylation of different RNA species, such as mRNAs, tRNAs and snRNAs, and acts as a regulator of fat mass, adipogenesis and energy homeostasis. Specifically demethylates N(6)-methyladenosine (m6A) RNA, the most prevalent internal modification of messenger RNA (mRNA) in higher eukaryotes. M6A demethylation by FTO affects mRNA expression and stability. Also able to demethylate m6A in U6 small nuclear RNA (snRNA). Mediates demethylation of N(6),2'-O-dimethyladenosine cap (m6A(m)), by demethylating the N(6)-methyladenosine at the second transcribed position of mRNAs and U6 snRNA. Demethylation of m6A(m) in the 5'-cap by FTO affects mRNA stability by promoting susceptibility to decapping. Also acts as a tRNA demethylase by removing N(1)-methyladenine from various tRNAs. Has no activity towards 1-methylguanine. Has no detectable activity towards double-stranded DNA. Also able to repair alkylated DNA and RNA by oxidative demethylation: demethylates single-stranded RNA containing 3-methyluracil, single-stranded DNA containing 3-methylthymine and has low demethylase activity towards single-stranded DNA containing 1-methyladenine or 3-methylcytosine. Ability to repair alkylated DNA and RNA is however unsure in vivo. Involved in the regulation of fat mass, adipogenesis and body weight, thereby contributing to the regulation of body size and body fat accumulation. Involved in the regulation of thermogenesis and the control of adipocyte differentiation into brown or white fat cells. Regulates activity of the dopaminergic midbrain circuitry via its ability to demethylate m6A in mRNAs. In Mus musculus (Mouse), this protein is Alpha-ketoglutarate-dependent dioxygenase FTO.